The following is a 127-amino-acid chain: uncharacterized protein (127 aa).

The protein localises to the mitochondrion. This is an uncharacterized protein from Arabidopsis thaliana (Mouse-ear cress).